Reading from the N-terminus, the 372-residue chain is DNA replication and repair protein RecF (372 aa).

30–37 (GENAQGKT) contacts ATP.

Belongs to the RecF family.

The protein localises to the cytoplasm. Its function is as follows. The RecF protein is involved in DNA metabolism; it is required for DNA replication and normal SOS inducibility. RecF binds preferentially to single-stranded, linear DNA. It also seems to bind ATP. The sequence is that of DNA replication and repair protein RecF from Exiguobacterium sp. (strain ATCC BAA-1283 / AT1b).